The sequence spans 164 residues: Shikimate kinase (164 aa).

Gly10–Thr15 provides a ligand contact to ATP. Thr14 contributes to the Mg(2+) binding site. Substrate is bound by residues Asp28, Arg52, and Gly75. Arg116 lines the ATP pocket. Arg134 lines the substrate pocket. Arg151 lines the ATP pocket.

This sequence belongs to the shikimate kinase family. As to quaternary structure, monomer. It depends on Mg(2+) as a cofactor.

It is found in the cytoplasm. It carries out the reaction shikimate + ATP = 3-phosphoshikimate + ADP + H(+). Its pathway is metabolic intermediate biosynthesis; chorismate biosynthesis; chorismate from D-erythrose 4-phosphate and phosphoenolpyruvate: step 5/7. Functionally, catalyzes the specific phosphorylation of the 3-hydroxyl group of shikimic acid using ATP as a cosubstrate. This Streptococcus equi subsp. zooepidemicus (strain MGCS10565) protein is Shikimate kinase.